Consider the following 472-residue polypeptide: Methylenetetrahydrofolate--tRNA-(uracil-5-)-methyltransferase TrmFO (472 aa).

10-15 (GGGLAG) is a binding site for FAD.

This sequence belongs to the MnmG family. TrmFO subfamily. FAD is required as a cofactor.

The protein resides in the cytoplasm. The enzyme catalyses uridine(54) in tRNA + (6R)-5,10-methylene-5,6,7,8-tetrahydrofolate + NADH + H(+) = 5-methyluridine(54) in tRNA + (6S)-5,6,7,8-tetrahydrofolate + NAD(+). It catalyses the reaction uridine(54) in tRNA + (6R)-5,10-methylene-5,6,7,8-tetrahydrofolate + NADPH + H(+) = 5-methyluridine(54) in tRNA + (6S)-5,6,7,8-tetrahydrofolate + NADP(+). Functionally, catalyzes the folate-dependent formation of 5-methyl-uridine at position 54 (M-5-U54) in all tRNAs. The sequence is that of Methylenetetrahydrofolate--tRNA-(uracil-5-)-methyltransferase TrmFO from Mesorhizobium japonicum (strain LMG 29417 / CECT 9101 / MAFF 303099) (Mesorhizobium loti (strain MAFF 303099)).